We begin with the raw amino-acid sequence, 306 residues long: UDP-3-O-acyl-N-acetylglucosamine deacetylase (306 aa).

The Zn(2+) site is built by H79, H238, and D242. Catalysis depends on H265, which acts as the Proton donor.

The protein belongs to the LpxC family. Requires Zn(2+) as cofactor.

It catalyses the reaction a UDP-3-O-[(3R)-3-hydroxyacyl]-N-acetyl-alpha-D-glucosamine + H2O = a UDP-3-O-[(3R)-3-hydroxyacyl]-alpha-D-glucosamine + acetate. It participates in glycolipid biosynthesis; lipid IV(A) biosynthesis; lipid IV(A) from (3R)-3-hydroxytetradecanoyl-[acyl-carrier-protein] and UDP-N-acetyl-alpha-D-glucosamine: step 2/6. Functionally, catalyzes the hydrolysis of UDP-3-O-myristoyl-N-acetylglucosamine to form UDP-3-O-myristoylglucosamine and acetate, the committed step in lipid A biosynthesis. The chain is UDP-3-O-acyl-N-acetylglucosamine deacetylase from Shewanella pealeana (strain ATCC 700345 / ANG-SQ1).